A 511-amino-acid polypeptide reads, in one-letter code: 2'-5'-oligoadenylate synthase-like protein 1 (511 aa).

2 consecutive Ubiquitin-like domains span residues 350–429 (IQVT…ISPE) and 430–506 (IQVF…EGAA).

Belongs to the 2-5A synthase family. Specifically interacts with the ligand binding domain of the thyroid receptor (TR). TRIP14 does not require the presence of thyroid hormone for its interaction. Binds MBD1.

The protein localises to the nucleus. Its subcellular location is the nucleolus. It is found in the cytoplasm. Its function is as follows. Does not have 2'-5'-OAS activity, but can bind double-stranded RNA. Displays antiviral activity via an alternative antiviral pathway independent of RNase L. The polypeptide is 2'-5'-oligoadenylate synthase-like protein 1 (Oasl1) (Mus musculus (Mouse)).